A 184-amino-acid chain; its full sequence is Photosystem I assembly protein Ycf4 (184 aa).

The next 2 membrane-spanning stretches (helical) occupy residues 22 to 42 (FFWA…GTSS) and 57 to 77 (ILFF…LFIS).

Belongs to the Ycf4 family.

The protein resides in the plastid. It is found in the chloroplast thylakoid membrane. Functionally, seems to be required for the assembly of the photosystem I complex. This Nandina domestica (Heavenly bamboo) protein is Photosystem I assembly protein Ycf4.